The following is a 224-amino-acid chain: UPF0758 protein CBUD_1789 (224 aa).

The region spanning 102-224 (QLGCTQDAQQ…SFSFAESGLL (123 aa)) is the MPN domain. Residues H173, H175, and D186 each contribute to the Zn(2+) site. The JAMM motif signature appears at 173–186 (HNHPSGVPDPSQAD).

This sequence belongs to the UPF0758 family.

The chain is UPF0758 protein CBUD_1789 from Coxiella burnetii (strain Dugway 5J108-111).